A 201-amino-acid polypeptide reads, in one-letter code: MALSWVLTVLSLLPLLEAQIPLCANLVPVPITNATLDRITGKWFYIASAFRNEEYNKSVQEIQATFFYFTPNKTEDTIFLREYQTRQDQCIYNTTYLNVQRENGTISRYVGGQEHFAHLLILRDTKTYMLAFDVNDEKNWGLSVYADKPETTKEQLGEFYEALDCLRIPKSDVVYTDWKKDKCEPLEKQHEKERKQEEGES.

An N-terminal signal peptide occupies residues 1 to 18 (MALSWVLTVLSLLPLLEA). A Pyrrolidone carboxylic acid modification is found at glutamine 19. 2 cysteine pairs are disulfide-bonded: cysteine 23-cysteine 165 and cysteine 90-cysteine 183. An N-linked (GlcNAc...) (complex) asparagine glycan is attached at asparagine 33. Asparagine 56 carries an N-linked (GlcNAc...) asparagine glycan. Asparagine 72 carries an N-linked (GlcNAc...) (complex) asparagine glycan. Residues asparagine 93 and asparagine 103 are each glycosylated (N-linked (GlcNAc...) asparagine).

Belongs to the calycin superfamily. Lipocalin family. N-glycosylated. N-glycan heterogeneity at Asn-33: Hex5HexNAc4 (minor), Hex6HexNAc5 (major) and dHex1Hex6HexNAc5 (minor). As to expression, expressed by the liver and secreted in plasma.

The protein localises to the secreted. Functionally, functions as a transport protein in the blood stream. Binds various ligands in the interior of its beta-barrel domain. Also binds synthetic drugs and influences their distribution and availability in the body. Appears to function in modulating the activity of the immune system during the acute-phase reaction. The sequence is that of Alpha-1-acid glycoprotein 1 (ORM1) from Homo sapiens (Human).